The following is a 396-amino-acid chain: Putative nickel insertion protein (396 aa).

It belongs to the LarC family.

The chain is Putative nickel insertion protein from Wolinella succinogenes (strain ATCC 29543 / DSM 1740 / CCUG 13145 / JCM 31913 / LMG 7466 / NCTC 11488 / FDC 602W) (Vibrio succinogenes).